The chain runs to 113 residues: Hydrogenase maturation factor HypA (113 aa).

Ni(2+) is bound at residue histidine 2. Zn(2+)-binding residues include cysteine 73, cysteine 76, cysteine 89, and cysteine 92.

It belongs to the HypA/HybF family.

Involved in the maturation of [NiFe] hydrogenases. Required for nickel insertion into the metal center of the hydrogenase. This chain is Hydrogenase maturation factor HypA, found in Albidiferax ferrireducens (strain ATCC BAA-621 / DSM 15236 / T118) (Rhodoferax ferrireducens).